Here is a 291-residue protein sequence, read N- to C-terminus: Protease HtpX (291 aa).

2 consecutive transmembrane segments (helical) span residues 4-24 (VLLF…VLSV) and 37-57 (GGLL…SLLM). His143 is a binding site for Zn(2+). Residue Glu144 is part of the active site. Residue His147 coordinates Zn(2+). 2 consecutive transmembrane segments (helical) span residues 158–178 (LIQG…AGIV) and 198–218 (FAIS…IVMW). Glu224 serves as a coordination point for Zn(2+).

Belongs to the peptidase M48B family. Requires Zn(2+) as cofactor.

The protein resides in the cell inner membrane. The sequence is that of Protease HtpX from Tolumonas auensis (strain DSM 9187 / NBRC 110442 / TA 4).